A 209-amino-acid polypeptide reads, in one-letter code: Small ribosomal subunit protein uS4 (209 aa).

Residues C99–G161 enclose the S4 RNA-binding domain.

The protein belongs to the universal ribosomal protein uS4 family. As to quaternary structure, part of the 30S ribosomal subunit. Contacts protein S5. The interaction surface between S4 and S5 is involved in control of translational fidelity.

Its function is as follows. One of the primary rRNA binding proteins, it binds directly to 16S rRNA where it nucleates assembly of the body of the 30S subunit. Functionally, with S5 and S12 plays an important role in translational accuracy. The polypeptide is Small ribosomal subunit protein uS4 (Acidobacterium capsulatum (strain ATCC 51196 / DSM 11244 / BCRC 80197 / JCM 7670 / NBRC 15755 / NCIMB 13165 / 161)).